Consider the following 386-residue polypeptide: Lipoyl synthase, mitochondrial (386 aa).

A mitochondrion-targeting transit peptide spans 1–21 (MISRNSILLRRLYPTTIIRTL). Cys-107, Cys-112, Cys-118, Cys-137, Cys-141, Cys-144, and Ser-352 together coordinate [4Fe-4S] cluster. In terms of domain architecture, Radical SAM core spans 122 to 341 (KKSEATATIM…RDTALDMGFL (220 aa)).

The protein belongs to the radical SAM superfamily. Lipoyl synthase family. [4Fe-4S] cluster is required as a cofactor.

It localises to the mitochondrion. The enzyme catalyses [[Fe-S] cluster scaffold protein carrying a second [4Fe-4S](2+) cluster] + N(6)-octanoyl-L-lysyl-[protein] + 2 oxidized [2Fe-2S]-[ferredoxin] + 2 S-adenosyl-L-methionine + 4 H(+) = [[Fe-S] cluster scaffold protein] + N(6)-[(R)-dihydrolipoyl]-L-lysyl-[protein] + 4 Fe(3+) + 2 hydrogen sulfide + 2 5'-deoxyadenosine + 2 L-methionine + 2 reduced [2Fe-2S]-[ferredoxin]. Its pathway is protein modification; protein lipoylation via endogenous pathway; protein N(6)-(lipoyl)lysine from octanoyl-[acyl-carrier-protein]: step 2/2. In terms of biological role, catalyzes the radical-mediated insertion of two sulfur atoms into the C-6 and C-8 positions of the octanoyl moiety bound to the lipoyl domains of lipoate-dependent enzymes, thereby converting the octanoylated domains into lipoylated derivatives. This is Lipoyl synthase, mitochondrial (LAB5) from Candida albicans (strain SC5314 / ATCC MYA-2876) (Yeast).